The following is a 1300-amino-acid chain: Nephrocystin-3 (1300 aa).

Residues 82-183 (KNNEVASMQK…LQRLQAQGIQ (102 aa)) are a coiled coil. TPR repeat units lie at residues 443 to 476 (TMED…ICEL), 916 to 949 (ADLY…RETA), 958 to 991 (AQSL…SENA), 1000 to 1033 (AREL…RQKS), 1066 to 1099 (ARTL…RERV), 1108 to 1141 (AQSI…RRRA), 1150 to 1183 (AYTV…RQKS), 1192 to 1225 (ATAL…YEDS), and 1234 to 1267 (GETL…KETE). Residues 1268 to 1288 (TSVLGAKAPSGHSSSGGDTYS) form a disordered region. A compositionally biased stretch (polar residues) spans 1278 to 1288 (GHSSSGGDTYS).

It is found in the cell projection. Its subcellular location is the cilium. Functionally, required for normal ciliary development and function. Inhibits disheveled-1-induced canonical Wnt-signaling activity and may also play a role in the control of non-canonical Wnt signaling that regulates planar cell polarity. Probably acts as a molecular switch between different Wnt signaling pathways. Required for proper convergent extension cell movements. This Xenopus laevis (African clawed frog) protein is Nephrocystin-3 (nphp3).